The following is a 123-amino-acid chain: Small ribosomal subunit protein uS12cz/uS12cy (123 aa).

This sequence belongs to the universal ribosomal protein uS12 family. As to quaternary structure, part of the 30S ribosomal subunit.

It localises to the plastid. Its subcellular location is the chloroplast. Functionally, with S4 and S5 plays an important role in translational accuracy. Located at the interface of the 30S and 50S subunits. In Gossypium hirsutum (Upland cotton), this protein is Small ribosomal subunit protein uS12cz/uS12cy (rps12-A).